Reading from the N-terminus, the 508-residue chain is Photosystem II CP47 reaction center protein (508 aa).

6 helical membrane passes run 21 to 36, 101 to 115, 140 to 156, 203 to 218, 237 to 252, and 457 to 472; these read AVHIMHTALVSGWAGS, IVFSGLCFLAAIWHW, GIHLFLAGVACFGFGAF, IAAGTLGILAGLFHLS, VLSSSIAAVFFAAFVV, and TFALLFFFGHIWHGAR.

This sequence belongs to the PsbB/PsbC family. PsbB subfamily. PSII is composed of 1 copy each of membrane proteins PsbA, PsbB, PsbC, PsbD, PsbE, PsbF, PsbH, PsbI, PsbJ, PsbK, PsbL, PsbM, PsbT, PsbX, PsbY, PsbZ, Psb30/Ycf12, at least 3 peripheral proteins of the oxygen-evolving complex and a large number of cofactors. It forms dimeric complexes. It depends on Binds multiple chlorophylls. PSII binds additional chlorophylls, carotenoids and specific lipids. as a cofactor.

The protein localises to the plastid. Its subcellular location is the chloroplast thylakoid membrane. Functionally, one of the components of the core complex of photosystem II (PSII). It binds chlorophyll and helps catalyze the primary light-induced photochemical processes of PSII. PSII is a light-driven water:plastoquinone oxidoreductase, using light energy to abstract electrons from H(2)O, generating O(2) and a proton gradient subsequently used for ATP formation. This is Photosystem II CP47 reaction center protein from Brachypodium distachyon (Purple false brome).